A 104-amino-acid chain; its full sequence is Major pilu subunit operon regulatory protein PapB (104 aa).

The protein localises to the cytoplasm. In terms of biological role, may act as both positive and negative regulator of pap transcription. Might positively regulate levels of papI and/or mbf. Its autoregulatory mode of action involves differential binding to separate sites. The protein is Major pilu subunit operon regulatory protein PapB (papB) of Escherichia coli.